A 491-amino-acid chain; its full sequence is Probable polygalacturonase (491 aa).

The chain crosses the membrane as a helical span at residues Pro15 to Leu35. Asn165, Asn175, and Asn214 each carry an N-linked (GlcNAc...) asparagine glycan. PbH1 repeat units follow at residues Ser230–Ser256, Cys257–Ser278, Ile319–Thr340, and Val348–Gly369. Asp271 (proton donor) is an active-site residue. Residues Asn399 and Asn421 are each glycosylated (N-linked (GlcNAc...) asparagine).

It belongs to the glycosyl hydrolase 28 family.

Its subcellular location is the membrane. It catalyses the reaction (1,4-alpha-D-galacturonosyl)n+m + H2O = (1,4-alpha-D-galacturonosyl)n + (1,4-alpha-D-galacturonosyl)m.. The protein is Probable polygalacturonase of Vitis vinifera (Grape).